The primary structure comprises 344 residues: Cyclin-G2 (344 aa).

The segment at Cys-298 to Ser-324 is disordered. Acidic residues predominate over residues Ser-302–Cys-313.

This sequence belongs to the cyclin family. Cyclin G subfamily. In terms of tissue distribution, highest levels in intestine. Intermediate levels in spleen, brain and kidney. Low levels in testis, stomach, pancreas, liver, salivary gland and muscle. According to PubMed:9139721 also abundant in thymus.

It localises to the cytoplasm. The protein resides in the nucleus. Its function is as follows. May play a role in growth regulation and in negative regulation of cell cycle progression. This chain is Cyclin-G2 (Ccng2), found in Mus musculus (Mouse).